Reading from the N-terminus, the 124-residue chain is Small ribosomal subunit protein uS12 (124 aa).

The protein belongs to the universal ribosomal protein uS12 family. In terms of assembly, part of the 30S ribosomal subunit. Contacts proteins S8 and S17. May interact with IF1 in the 30S initiation complex.

With S4 and S5 plays an important role in translational accuracy. Its function is as follows. Interacts with and stabilizes bases of the 16S rRNA that are involved in tRNA selection in the A site and with the mRNA backbone. Located at the interface of the 30S and 50S subunits, it traverses the body of the 30S subunit contacting proteins on the other side and probably holding the rRNA structure together. The combined cluster of proteins S8, S12 and S17 appears to hold together the shoulder and platform of the 30S subunit. This Photorhabdus laumondii subsp. laumondii (strain DSM 15139 / CIP 105565 / TT01) (Photorhabdus luminescens subsp. laumondii) protein is Small ribosomal subunit protein uS12.